A 311-amino-acid chain; its full sequence is MSQNQEISKKEQYNLNKLQKRLRRNVGEAIADFNMIEEGDRIMVCLSGGKDSYTMLEILRNLQQSAPINFSLVAVNLDQKQPGFPEHVLPEYLEKLGVEYKIVEENTYGIVKEKIPEGKTTCSLCSRLRRGILYRTATELGTTKIALGHHRDDILQTLFLNMFYGGKMKGMPPKLMSDDGKHIVIRPLAYCREKDIQRFADAKAFPIIPCNLCGSQPNLQRQVIADMLRDWDKRYPGRIETMFSAMQNVVPSHLCDTNLFDFKGITHGSEVVNGGDLAFDREEIPLQPAGWQPEEDENQLDELRLNVVEVK.

Residues 47–52 carry the PP-loop motif motif; that stretch reads SGGKDS. The [4Fe-4S] cluster site is built by Cys-122, Cys-125, and Cys-213.

This sequence belongs to the TtcA family. In terms of assembly, homodimer. Mg(2+) serves as cofactor. The cofactor is [4Fe-4S] cluster.

It is found in the cytoplasm. It catalyses the reaction cytidine(32) in tRNA + S-sulfanyl-L-cysteinyl-[cysteine desulfurase] + AH2 + ATP = 2-thiocytidine(32) in tRNA + L-cysteinyl-[cysteine desulfurase] + A + AMP + diphosphate + H(+). It participates in tRNA modification. Functionally, catalyzes the ATP-dependent 2-thiolation of cytidine in position 32 of tRNA, to form 2-thiocytidine (s(2)C32). The sulfur atoms are provided by the cysteine/cysteine desulfurase (IscS) system. This chain is tRNA-cytidine(32) 2-sulfurtransferase, found in Shigella flexneri serotype 5b (strain 8401).